The following is a 229-amino-acid chain: 2,3-bisphosphoglycerate-dependent phosphoglycerate mutase (229 aa).

Residues 7 to 14 (RHGQSEWN), 20 to 21 (TG), R59, 86 to 89 (ERHY), K97, 113 to 114 (RR), and 182 to 183 (GN) each bind substrate. H8 serves as the catalytic Tele-phosphohistidine intermediate. E86 acts as the Proton donor/acceptor in catalysis.

The protein belongs to the phosphoglycerate mutase family. BPG-dependent PGAM subfamily.

It catalyses the reaction (2R)-2-phosphoglycerate = (2R)-3-phosphoglycerate. Its pathway is carbohydrate degradation; glycolysis; pyruvate from D-glyceraldehyde 3-phosphate: step 3/5. Its function is as follows. Catalyzes the interconversion of 2-phosphoglycerate and 3-phosphoglycerate. This is 2,3-bisphosphoglycerate-dependent phosphoglycerate mutase from Listeria monocytogenes serotype 4a (strain HCC23).